The primary structure comprises 432 residues: Putative cyclin-F1-4 (432 aa).

It belongs to the cyclin family. Cyclin F subfamily.

In Oryza sativa subsp. japonica (Rice), this protein is Putative cyclin-F1-4 (CycF1-4).